The sequence spans 533 residues: uncharacterized protein (533 aa).

Positions 1-26 are disordered; the sequence is MKRFFSKLFSKSPTSGRVPSPDSDYS. 2 positions are modified to phosphoserine: Ser-20 and Ser-23. Tyr-25 carries the post-translational modification Phosphotyrosine. Ser-26 is modified (phosphoserine). 10 helical membrane passes run 178-198, 213-230, 242-264, 274-296, 313-333, 353-373, 394-414, 435-455, 466-486, and 495-515; these read ILAVLHIPVALIWLNLEHILI, YMRVFILAAPGYAVFEAL, PITYVLCFAAPLNILLNYLLVWH, APVAVATTFWFQSICLILYICFS, LSPMLHFSFHGMLMIVTEWAA, SILLTSTSLLFQIPFAFAVAS, RVAYSLALCISIFDGSLIFCF, IFPILSLFIVTDGLNAVGGGL, GLISIGSSYLFALPVTVFVVV, and IWCGMILSSVTAITCQFTVLF.

The protein belongs to the multi antimicrobial extrusion (MATE) (TC 2.A.66.1) family.

It is found in the vacuole membrane. This is an uncharacterized protein from Schizosaccharomyces pombe (strain 972 / ATCC 24843) (Fission yeast).